Consider the following 331-residue polypeptide: GTPase Obg (331 aa).

One can recognise an Obg domain in the interval 1-159 (MHFIDEVKIY…MWIHLRLKLL (159 aa)). The region spanning 160-327 (SDVGLIGLPN…IVKLALEIIK (168 aa)) is the OBG-type G domain. GTP-binding positions include 166 to 173 (GLPNAGKS), 191 to 195 (FTTLV), 212 to 215 (DIPG), 279 to 282 (NKCD), and 308 to 310 (STY). Positions 173 and 193 each coordinate Mg(2+).

It belongs to the TRAFAC class OBG-HflX-like GTPase superfamily. OBG GTPase family. In terms of assembly, monomer. The cofactor is Mg(2+).

The protein localises to the cytoplasm. Its function is as follows. An essential GTPase which binds GTP, GDP and possibly (p)ppGpp with moderate affinity, with high nucleotide exchange rates and a fairly low GTP hydrolysis rate. Plays a role in control of the cell cycle, stress response, ribosome biogenesis and in those bacteria that undergo differentiation, in morphogenesis control. The chain is GTPase Obg from Rickettsia prowazekii (strain Madrid E).